The primary structure comprises 339 residues: Tryptophan--tRNA ligase (339 aa).

Residues glutamine 11–threonine 13 and glycine 19–asparagine 20 contribute to the ATP site. The 'HIGH' region signature appears at proline 12–asparagine 20. Aspartate 135 lines the L-tryptophan pocket. Residues glycine 147 to aspartate 149, isoleucine 191, and lysine 200 to serine 204 contribute to the ATP site. The short motif at lysine 200–serine 204 is the 'KMSKS' region element.

Belongs to the class-I aminoacyl-tRNA synthetase family. In terms of assembly, homodimer.

The protein resides in the cytoplasm. The enzyme catalyses tRNA(Trp) + L-tryptophan + ATP = L-tryptophyl-tRNA(Trp) + AMP + diphosphate + H(+). Catalyzes the attachment of tryptophan to tRNA(Trp). This is Tryptophan--tRNA ligase from Prochlorococcus marinus (strain SARG / CCMP1375 / SS120).